A 709-amino-acid chain; its full sequence is Elongation factor G (709 aa).

Positions 8–297 (ANTRNIGIMA…AVIDYLPSPL (290 aa)) constitute a tr-type G domain. GTP is bound by residues 17-24 (AHVDAGKT), 81-85 (DTPGH), and 135-138 (NKMD).

It belongs to the TRAFAC class translation factor GTPase superfamily. Classic translation factor GTPase family. EF-G/EF-2 subfamily.

The protein localises to the cytoplasm. In terms of biological role, catalyzes the GTP-dependent ribosomal translocation step during translation elongation. During this step, the ribosome changes from the pre-translocational (PRE) to the post-translocational (POST) state as the newly formed A-site-bound peptidyl-tRNA and P-site-bound deacylated tRNA move to the P and E sites, respectively. Catalyzes the coordinated movement of the two tRNA molecules, the mRNA and conformational changes in the ribosome. This Lactococcus lactis subsp. cremoris (strain MG1363) protein is Elongation factor G.